The primary structure comprises 840 residues: Phosphatidylglycerol lysyltransferase (840 aa).

The Cytoplasmic portion of the chain corresponds to 1 to 8 (MNQEVKNK). Residues 9-29 (IFSILKITFATALFIFVVITL) form a helical membrane-spanning segment. Residues 30–52 (YRELSGINFKDTLVEFSKINRMS) lie on the Extracellular side of the membrane. Residues 53-73 (LVLLFIGGGASLVILSMYDVI) traverse the membrane as a helical segment. The Cytoplasmic portion of the chain corresponds to 74 to 89 (LSRALKMDISLGKVLR). A helical membrane pass occupies residues 90–110 (VSYIINALNAIVGFGGFIGAG). The Extracellular portion of the chain corresponds to 111–128 (VRAMVYKNYTHDKKKLVH). Residues 129-149 (FISLILISMLTGLSLLSLLIV) traverse the membrane as a helical segment. The Cytoplasmic portion of the chain corresponds to 150–161 (FHVFDASLILNK). The helical transmembrane segment at 162–182 (ITWVRWVLYAVSLFLPLFIIY) threads the bilayer. Residues 183–200 (SMVRPPDKNNRYVGLYCT) lie on the Extracellular side of the membrane. Residues 201–221 (LVSCVEWLAAAVVLYFCGVIV) form a helical membrane-spanning segment. The Cytoplasmic portion of the chain corresponds to 222–229 (DVHVSFMS). Residues 230 to 250 (FIAIFIIAALSGLVSFIPGGF) traverse the membrane as a helical segment. Topologically, residues 251–271 (GAFDLVVLLGFKTLGVPEEKV) are extracellular. A helical membrane pass occupies residues 272–292 (LLMLLLYRFAYYFVPVIIALI). The Cytoplasmic portion of the chain corresponds to 293–337 (LSSFEFGTSAKKYIEGSKYFIPAKDVTSFLMSYQKDIIAKIPSLS). A helical transmembrane segment spans residues 338 to 358 (LAILVFFTSMIFFVNNLTIVY). The Extracellular portion of the chain corresponds to 359–369 (DALYDGNHLTY). The chain crosses the membrane as a helical span at residues 370–390 (YLLLAIHTSACLLLLLNVVGI). Residues 391 to 394 (YKQS) are Cytoplasmic-facing. Transmembrane regions (helical) follow at residues 395 to 415 (RRAI…TLFT) and 416 to 436 (YASY…IVAF). Residues 437–450 (RRARRLKRPIRMRN) lie on the Cytoplasmic side of the membrane. The chain crosses the membrane as a helical span at residues 451 to 471 (LVAMLLFSIFILYINHIFIAG). Over 472–489 (TFYALDVYTIEMHTSVLK) the chain is Extracellular. A helical transmembrane segment spans residues 490–510 (YYFWITILIIAIIVGAIAWLF). Topologically, residues 511–840 (DYQFSKVRIS…SKVMRVIRHK (330 aa)) are cytoplasmic.

Belongs to the LPG synthase family.

It is found in the cell membrane. The catalysed reaction is L-lysyl-tRNA(Lys) + a 1,2-diacyl-sn-glycero-3-phospho-(1'-sn-glycerol) = a 1,2-diacyl-sn-glycero-3-phospho-1'-(3'-O-L-lysyl)-sn-glycerol + tRNA(Lys). In terms of biological role, catalyzes the transfer of a lysyl group from L-lysyl-tRNA(Lys) to membrane-bound phosphatidylglycerol (PG), which produces lysylphosphatidylglycerol (LPG), a major component of the bacterial membrane with a positive net charge. LPG synthesis contributes to bacterial virulence as it is involved in the resistance mechanism against cationic antimicrobial peptides (CAMP) produces by the host's immune system (defensins, cathelicidins) and by the competing microorganisms (bacteriocins). In fact, the modification of anionic phosphatidylglycerol with positively charged L-lysine results in repulsion of the peptides. The sequence is that of Phosphatidylglycerol lysyltransferase (mprF) from Staphylococcus aureus (strain MRSA252).